Reading from the N-terminus, the 748-residue chain is MRVGCCLLLKPIRQRLCTASISSRHIMRWCATSSSNINSTETAAKMPDDDVSGSLSAPSLLKYKIEPSTATMGAPRPPHDDDRAFCTLASFPPSHIRNFAVVAHVDHGKTTLSDAILRRTGVLSGSQVGTYTDRLLVERERGITIKAQTCSIFVVRDGEEFLLNLIDTPGHVDFQYEVSRSLSASDAALLLVDAAQGIEAQTMAHFHMALDRGLTILPVLTKMDAVLSDAPVDRALQDLEDSTGLLRREVLFTSAKEQVGIEALLHAIIERVPPPTGLLGLSDLQQLPPLLPGSAERAAMEEKMVPLRALLFDSWTSECGGGLRRPAPRGGEKVNSGNDNDSNLICLVRIIDGTLTAKTVVTFYQSQRRCEALEVGIIHPELRPTAALTAGMVGYVVFSRVRGEEFFVGETLYTLPTRKFAREDIVPVPGFRRVQPVVFAGFYPDEGEYITQLREAVEKLRVNEPAVTMEPLDCPALGSGLQLGFLGMLHMQVFQERLLAEFGQRVLVTPPLVQYKYREAGSDEEEPLKPLTVHTWKWIHEGAACYLEPYVTATIITRREHFQAIDSEALRRFRGEQLDMRVLDDARVLVRYKMPLADLARGFFAVVKSLSHGYASLDYGDPVYEEADLVKVDVLVQKSRISALSVICPRSEAPSIGKRIVSSLKSNLTRTAVDIPLQAMVGSKIVARETVKAYRKDVTAKIHAGDISRKQKKWNDQKKGKERMARRTVGAVTLDQSILAAAMGAISL.

The N-terminal 29 residues, 1–29 (MRVGCCLLLKPIRQRLCTASISSRHIMRW), are a transit peptide targeting the mitochondrion. One can recognise a tr-type G domain in the interval 94-276 (SHIRNFAVVA…AIIERVPPPT (183 aa)). Residues 103 to 110 (AHVDHGKT), 167 to 171 (DTPGH), and 221 to 224 (TKMD) contribute to the GTP site.

It belongs to the TRAFAC class translation factor GTPase superfamily. Classic translation factor GTPase family. LepA subfamily.

It is found in the mitochondrion inner membrane. It catalyses the reaction GTP + H2O = GDP + phosphate + H(+). Functionally, promotes mitochondrial protein synthesis. May act as a fidelity factor of the translation reaction, by catalyzing a one-codon backward translocation of tRNAs on improperly translocated ribosomes. Binds to mitochondrial ribosomes in a GTP-dependent manner. The polypeptide is Translation factor GUF1 homolog 1, mitochondrial (Trypanosoma cruzi (strain CL Brener)).